Reading from the N-terminus, the 285-residue chain is Probable endonuclease 4 (285 aa).

Positions 69, 109, 145, 179, 182, 216, 229, 231, and 261 each coordinate Zn(2+).

It belongs to the AP endonuclease 2 family. Zn(2+) serves as cofactor.

The catalysed reaction is Endonucleolytic cleavage to 5'-phosphooligonucleotide end-products.. Endonuclease IV plays a role in DNA repair. It cleaves phosphodiester bonds at apurinic or apyrimidinic (AP) sites, generating a 3'-hydroxyl group and a 5'-terminal sugar phosphate. The polypeptide is Probable endonuclease 4 (Escherichia fergusonii (strain ATCC 35469 / DSM 13698 / CCUG 18766 / IAM 14443 / JCM 21226 / LMG 7866 / NBRC 102419 / NCTC 12128 / CDC 0568-73)).